A 527-amino-acid polypeptide reads, in one-letter code: Transcriptional regulator ATRX (527 aa).

The interval 1 to 527 is disordered; the sequence is GRSVVEFGDM…RSYKQKKKRR (527 aa). Positions 14 to 23 are enriched in polar residues; the sequence is RQQSAVSSAG. The span at 27–46 shows a compositional bias: basic and acidic residues; sequence PSGKEENVHSPEDKRVTKSK. Positions 47 to 59 are enriched in basic residues; sequence EKSKHLRTRTGRK. Positions 60–84 are enriched in basic and acidic residues; that stretch reads VKSDVTDRFRKKEQSSESSEGEKKQ. Phosphoserine is present on residues Ser62 and Ser74. The span at 85–94 shows a compositional bias: basic residues; sequence GRQRTGTRGK. Composition is skewed to basic and acidic residues over residues 95–122, 136–145, 152–194, and 204–250; these read KSTDLKEEKVKREREYESSSDGTEKLPE, NKNDTTDEAK, DKSC…EKKQ, and KRPE…KEVK. A Glycyl lysine isopeptide (Lys-Gly) (interchain with G-Cter in SUMO2) cross-link involves residue Lys105. 3 positions are modified to phosphoserine: Ser112, Ser113, and Ser114. Ser162 is modified (phosphoserine). Residue Arg184 is modified to Citrulline. Residues 267-297 are compositionally biased toward basic residues; it reads KQKKQRMSAKKKNSNTKERKRKSLRATTTKR. The tract at residues 290–427 is interaction with DAXX; it reads LRATTTKRKQ…SNQVNSESDS (138 aa). Phosphoserine is present on residues Ser345, Ser346, and Ser354. Residues 368 to 382 show a composition bias toward basic and acidic residues; that stretch reads PENRIAKKMLLEEIK. Residues 387–398 are compositionally biased toward acidic residues; that stretch reads SDEDGSSDDEPK. Over residues 399–410 the composition is skewed to basic and acidic residues; sequence EGEKKRIGKQSE. Phosphoserine is present on residues Ser423, Ser425, and Ser427. Positions 435–446 are enriched in basic residues; it reads PRYRHRLLRHKL. 2 positions are modified to phosphoserine: Ser449 and Ser453. Basic and acidic residues-rich tracts occupy residues 454-469 and 509-518; these read GGEKKTKPKEHKETKG and KKAELEENQR.

The protein belongs to the SNF2/RAD54 helicase family. Interacts with DAXX to form the chromatin remodeling complex ATRX:DAXX. Probably binds EZH2. Binds annexin V in a calcium and phosphatidylcholine/phosphatidylserine-dependent manner. Interacts directly with CBX5 via the PxVxL motif. Interacts with RAD50, MRE11 and NBN; indicative for an association with the MRN complex. Interacts with histone MACROH2A1. Interacts with histone H3 peptides methylated at 'Lys-10' with preferences H3K9me3 &gt; H3K9me2 &gt; H3K9me1. Interacts with histone H3 peptides unmethylated at 'Lys-5' (H3K4me0). Interacts with MECP2, SMC1 and SMC3. Interacts with SETDB1, TRIM28 and ZNF274. In terms of processing, citrullinated by PADI4.

It is found in the nucleus. Its subcellular location is the chromosome. It localises to the telomere. The protein resides in the PML body. The enzyme catalyses ATP + H2O = ADP + phosphate + H(+). Functionally, involved in transcriptional regulation and chromatin remodeling. Facilitates DNA replication in multiple cellular environments and is required for efficient replication of a subset of genomic loci. Binds to DNA tandem repeat sequences in both telomeres and euchromatin and in vitro binds DNA quadruplex structures. May help stabilizing G-rich regions into regular chromatin structures by remodeling G4 DNA and incorporating H3.3-containing nucleosomes. Catalytic component of the chromatin remodeling complex ATRX:DAXX which has ATP-dependent DNA translocase activity and catalyzes the replication-independent deposition of histone H3.3 in pericentric DNA repeats outside S-phase and telomeres, and the in vitro remodeling of H3.3-containing nucleosomes. Its heterochromatin targeting is proposed to involve a combinatorial readout of histone H3 modifications (specifically methylation states of H3K9 and H3K4) and association with CBX5. Involved in maintaining telomere structural integrity in embryonic stem cells probably implying recruitment of CBX5 to telomeres. May be involved in transcriptional regulation of telomeric repeat-containing RNA (TERRA). Acts as a negative regulator of chromatin incorporation of transcriptionally repressive histone MACROH2A1, particularily at telomeres. Participates in the allele-specific gene expression at the imprinted IGF2/H19 gene locus. On the maternal allele, required for the chromatin occupancy of SMC1 and CTCTF within the H19 imprinting control region (ICR) and involved in esatblishment of histone tails modifications in the ICR. Binds to zinc-finger coding genes with atypical chromatin signatures and regulates its H3K9me3 levels. Forms a complex with ZNF274, TRIM28 and SETDB1 to facilitate the deposition and maintenance of H3K9me3 at the 3' exons of zinc-finger genes. This Rattus norvegicus (Rat) protein is Transcriptional regulator ATRX (Atrx).